A 372-amino-acid polypeptide reads, in one-letter code: Saccharopine dehydrogenase [NAD(+), L-lysine-forming] (372 aa).

Positions 17 and 76 each coordinate L-saccharopine. The active-site Proton acceptor is the lysine 76. Catalysis depends on histidine 95, which acts as the Proton donor. An L-saccharopine-binding site is contributed by glutamine 100. Arginine 129 contacts NAD(+). Residues arginine 130 and phenylalanine 134 each coordinate L-saccharopine. NAD(+)-binding positions include 202-203 (GR), aspartate 226, threonine 230, tyrosine 250, and valine 277. An intrachain disulfide couples cysteine 204 to cysteine 248. 278–280 (SAD) serves as a coordination point for L-saccharopine. 317-320 (IDHL) is a binding site for NAD(+). A Microbody targeting signal motif is present at residues 370–372 (SKL).

The protein belongs to the AlaDH/PNT family. In terms of assembly, monomer.

Its subcellular location is the peroxisome. It carries out the reaction L-saccharopine + NAD(+) + H2O = L-lysine + 2-oxoglutarate + NADH + H(+). The protein operates within amino-acid biosynthesis; L-lysine biosynthesis via AAA pathway; L-lysine from L-alpha-aminoadipate (fungal route): step 3/3. Functionally, catalyzes the NAD(+)-dependent cleavage of saccharopine to L-lysine and 2-oxoglutarate, the final step in the alpha-aminoadipate (AAA) pathway for lysin biosynthesis. This is Saccharopine dehydrogenase [NAD(+), L-lysine-forming] (LYS1) from Candida glabrata (strain ATCC 2001 / BCRC 20586 / JCM 3761 / NBRC 0622 / NRRL Y-65 / CBS 138) (Yeast).